The sequence spans 1086 residues: NAD(P) transhydrogenase, mitochondrial (1086 aa).

The transit peptide at 1 to 43 (MANLLKTVVTGCSCPFLSNLGSCKVLPGKKNFLRTFHTHRILW) directs the protein to the mitochondrion. Residues 44 to 474 (CSAPVKPGIP…TITPFRKTMT (431 aa)) lie on the Mitochondrial matrix side of the membrane. Lys70 carries the N6-acetyllysine modification. An N6-succinyllysine modification is found at Lys117. 182–184 (RVT) serves as a coordination point for NAD(+). Lys224 bears the N6-succinyllysine mark. NAD(+) contacts are provided by residues Val237, 257–259 (DTR), and Gly287. Lys294 is modified (N6-succinyllysine). The NAD(+) site is built by Glu300 and Leu319. Lys331 is modified (N6-succinyllysine). Lys397 carries the N6-acetyllysine modification. Helical transmembrane passes span 475 to 493 (SASV…GIAA), 501 to 521 (MVTT…GVTP), 527 to 546 (LMSV…LVLM), and 558 to 578 (GLAA…FLVT). The Mitochondrial matrix segment spans residues 579–595 (QRMLDMFKRPTDPPEYN). The next 5 membrane-spanning stretches (helical) occupy residues 596-616 (YLYL…LYSG), 622-642 (IMYL…STQG), 646-666 (LGNA…LGGL), 672-691 (LLAQ…LTIA), and 702-722 (LVAA…IAEY). The Cytoplasmic segment spans residues 723-739 (IIEYPHFATDAAANLTK). Helical transmembrane passes span 740–760 (IVAY…LVAY), 778–797 (HLLN…PFMM), 801–819 (FTTG…AVMG), 833–853 (VVIT…GFLL), and 857–879 (LLTI…MCVA). Over 880 to 1086 (MNRSLANVIL…QAKVRESYQK (207 aa)) the chain is Mitochondrial matrix. NADP(+) is bound by residues Tyr933, 965–970 (VAGRMP), 1009–1011 (NDT), 1026–1027 (GM), 1042–1049 (KRSLGVGY), and 1068–1069 (DA). Lys1079 is subject to N6-succinyllysine.

In the N-terminal section; belongs to the AlaDH/PNT family. This sequence in the C-terminal section; belongs to the PNT beta subunit family. As to quaternary structure, homodimer.

Its subcellular location is the mitochondrion inner membrane. It catalyses the reaction NAD(+) + NADPH + H(+)(in) = NADH + NADP(+) + H(+)(out). The transhydrogenation between NADH and NADP is coupled to respiration and ATP hydrolysis and functions as a proton pump across the membrane. May play a role in reactive oxygen species (ROS) detoxification in the adrenal gland. The protein is NAD(P) transhydrogenase, mitochondrial (NNT) of Bos taurus (Bovine).